The sequence spans 141 residues: MPTIAQLIRNKRAPKVKKTKSPALLFTYNSLHKKTTKNPSPLKSGVCTRVGTMTPKKPNSALRKYAKVRLSNGFEVLAYIPGEGHNLQEHSVVVIRGGRVKDLPGVRYHIVRGAGDASGVEKRRQQRSLYGAKRPKKEASK.

A 3-methylthioaspartic acid modification is found at D102. The segment at 115-141 (GDASGVEKRRQQRSLYGAKRPKKEASK) is disordered.

The protein belongs to the universal ribosomal protein uS12 family. As to quaternary structure, part of the 30S ribosomal subunit. Contacts proteins S8 and S17. May interact with IF1 in the 30S initiation complex.

Its function is as follows. With S4 and S5 plays an important role in translational accuracy. Interacts with and stabilizes bases of the 16S rRNA that are involved in tRNA selection in the A site and with the mRNA backbone. Located at the interface of the 30S and 50S subunits, it traverses the body of the 30S subunit contacting proteins on the other side and probably holding the rRNA structure together. The combined cluster of proteins S8, S12 and S17 appears to hold together the shoulder and platform of the 30S subunit. In Ureaplasma parvum serovar 3 (strain ATCC 27815 / 27 / NCTC 11736), this protein is Small ribosomal subunit protein uS12.